We begin with the raw amino-acid sequence, 345 residues long: Fe-S cluster assembly protein DRE2 (345 aa).

Residues G29–V163 are N-terminal SAM-like domain. The interval P164–L237 is linker. [2Fe-2S] cluster-binding residues include C247, C258, C261, and C263. The fe-S binding site A stretch occupies residues C247 to C263. C308, C311, C319, and C322 together coordinate [4Fe-4S] cluster. 2 short sequence motifs (cx2C motif) span residues C308–C311 and C319–C322. Positions C308–C322 are fe-S binding site B.

This sequence belongs to the anamorsin family. As to quaternary structure, monomer. Interacts with TAH18. Interacts with MIA40. Requires [2Fe-2S] cluster as cofactor. [4Fe-4S] cluster serves as cofactor.

Its subcellular location is the cytoplasm. It is found in the mitochondrion intermembrane space. In terms of biological role, component of the cytosolic iron-sulfur (Fe-S) protein assembly (CIA) machinery required for the maturation of extramitochondrial Fe-S proteins. Part of an electron transfer chain functioning in an early step of cytosolic Fe-S biogenesis, facilitating the de novo assembly of a [4Fe-4S] cluster on the scaffold complex CFD1-NBP35. Electrons are transferred to DRE2 from NADPH via the FAD- and FMN-containing protein TAH18. TAH18-DRE2 are also required for the assembly of the diferric tyrosyl radical cofactor of ribonucleotide reductase (RNR), probably by providing electrons for reduction during radical cofactor maturation in the catalytic small subunit RNR2. The chain is Fe-S cluster assembly protein DRE2 from Podospora anserina (strain S / ATCC MYA-4624 / DSM 980 / FGSC 10383) (Pleurage anserina).